The sequence spans 549 residues: Glucose-6-phosphate isomerase (549 aa).

Residue E355 is the Proton donor of the active site. Residues H387 and K515 contribute to the active site.

This sequence belongs to the GPI family.

It localises to the cytoplasm. It catalyses the reaction alpha-D-glucose 6-phosphate = beta-D-fructose 6-phosphate. It participates in carbohydrate biosynthesis; gluconeogenesis. The protein operates within carbohydrate degradation; glycolysis; D-glyceraldehyde 3-phosphate and glycerone phosphate from D-glucose: step 2/4. In terms of biological role, catalyzes the reversible isomerization of glucose-6-phosphate to fructose-6-phosphate. This chain is Glucose-6-phosphate isomerase, found in Haemophilus influenzae (strain 86-028NP).